The sequence spans 277 residues: Protein PTST, chloroplastic (277 aa).

The N-terminal 44 residues, 1-44, are a transit peptide targeting the chloroplast; that stretch reads MGCVPRIEFGCSSQSLTLSWNLRAWNLCRLNTISHFQKLPYPLV. Positions 95-152 form a coiled coil; it reads DTERSKLVKKLSEANQQNRFLKRQLKTQEHEITNIKTELALMELEVQALVKLAEEIAN.

In terms of assembly, interacts with GBSS1.

It localises to the plastid. The protein resides in the chloroplast stroma. In terms of biological role, involved in targeting GBSS1 to the starch granule. Was originally thought to be a carbohydrate-binding scaffold protein, but it has been shown that it is mainly found as a soluble protein and that interaction with GBSS1 is a pre-requisite for subsequent starch granule binding. Dissociation from starch as a function of pH, Mg(2+) concentration or redox state is not observed. Interacts primarily with amylopectin and is required for amylose synthesis. The sequence is that of Protein PTST, chloroplastic from Arabidopsis thaliana (Mouse-ear cress).